The primary structure comprises 426 residues: DNA primase DnaG (426 aa).

The region spanning Asp165–Pro241 is the Toprim domain. Residues Glu171, Asp215, and Asp217 each coordinate Mg(2+). The tract at residues Pro278–Gln298 is disordered. A compositionally biased stretch (pro residues) spans Gln285–Val294.

It belongs to the archaeal DnaG primase family. As to quaternary structure, forms a ternary complex with MCM helicase and DNA. Component of the archaeal exosome complex. Requires Mg(2+) as cofactor.

It carries out the reaction ssDNA + n NTP = ssDNA/pppN(pN)n-1 hybrid + (n-1) diphosphate.. RNA polymerase that catalyzes the synthesis of short RNA molecules used as primers for DNA polymerase during DNA replication. Also part of the exosome, which is a complex involved in RNA degradation. Acts as a poly(A)-binding protein that enhances the interaction between heteromeric, adenine-rich transcripts and the exosome. The protein is DNA primase DnaG of Hyperthermus butylicus (strain DSM 5456 / JCM 9403 / PLM1-5).